A 943-amino-acid chain; its full sequence is Translation initiation factor IF-2 (943 aa).

Disordered stretches follow at residues 96-229 (FIKR…ERRR) and 243-352 (AAPK…QRQQ). The span at 104–116 (DAPSDAAESAPSA) shows a compositional bias: low complexity. 2 stretches are compositionally biased toward basic and acidic residues: residues 120–163 (ELVR…EERA) and 171–229 (AEKK…ERRR). Low complexity predominate over residues 278 to 293 (ATGSGTGARAAAPSAP). Over residues 313-323 (TTKKKEIKTRG) the composition is skewed to basic and acidic residues. Positions 443–612 (SRAPVVTVMG…LLQAEVLELK (170 aa)) constitute a tr-type G domain. The G1 stretch occupies residues 452–459 (GHVDHGKT). 452–459 (GHVDHGKT) provides a ligand contact to GTP. Positions 477–481 (GITQH) are G2. The G3 stretch occupies residues 498-501 (DTPG). GTP-binding positions include 498-502 (DTPGH) and 552-555 (TKAD). Positions 552–555 (TKAD) are G4. Residues 588–590 (SSK) are G5.

Belongs to the TRAFAC class translation factor GTPase superfamily. Classic translation factor GTPase family. IF-2 subfamily.

The protein localises to the cytoplasm. In terms of biological role, one of the essential components for the initiation of protein synthesis. Protects formylmethionyl-tRNA from spontaneous hydrolysis and promotes its binding to the 30S ribosomal subunits. Also involved in the hydrolysis of GTP during the formation of the 70S ribosomal complex. The sequence is that of Translation initiation factor IF-2 from Acidovorax sp. (strain JS42).